Reading from the N-terminus, the 260-residue chain is ATP synthase subunit a (260 aa).

Helical transmembrane passes span 27–47 (FWTV…LFIW), 90–110 (IAPL…MDLI), 132–154 (SADV…YYSI), 208–228 (LIFI…LSVP), and 230–250 (AIFH…LTIV).

The protein belongs to the ATPase A chain family. In terms of assembly, F-type ATPases have 2 components, CF(1) - the catalytic core - and CF(0) - the membrane proton channel. CF(1) has five subunits: alpha(3), beta(3), gamma(1), delta(1), epsilon(1). CF(0) has three main subunits: a(1), b(2) and c(9-12). The alpha and beta chains form an alternating ring which encloses part of the gamma chain. CF(1) is attached to CF(0) by a central stalk formed by the gamma and epsilon chains, while a peripheral stalk is formed by the delta and b chains.

It is found in the cell inner membrane. Key component of the proton channel; it plays a direct role in the translocation of protons across the membrane. This chain is ATP synthase subunit a, found in Aeromonas hydrophila subsp. hydrophila (strain ATCC 7966 / DSM 30187 / BCRC 13018 / CCUG 14551 / JCM 1027 / KCTC 2358 / NCIMB 9240 / NCTC 8049).